A 477-amino-acid chain; its full sequence is Cytochrome c-552 (477 aa).

A signal peptide spans 1–26 (MVRISTSISYLWGMVASLFLMMPAYS). Residue His94 coordinates heme c. Heme contacts are provided by Cys122, Cys125, and Lys126. Heme c is bound by residues Cys160, Cys163, His164, Cys209, Cys212, and His213. Glu215, Tyr216, Lys261, and Gln263 together coordinate Ca(2+). Tyr216 contacts substrate. His264 contacts substrate. Residues His275, Cys282, Cys285, His286, His301, Cys314, Cys317, His318, and His393 each coordinate heme c.

The protein belongs to the cytochrome c-552 family. The cofactor is Ca(2+). Requires heme c as cofactor.

The protein resides in the periplasm. It carries out the reaction 6 Fe(III)-[cytochrome c] + NH4(+) + 2 H2O = 6 Fe(II)-[cytochrome c] + nitrite + 8 H(+). Its pathway is nitrogen metabolism; nitrate reduction (assimilation). Its function is as follows. Catalyzes the reduction of nitrite to ammonia, consuming six electrons in the process. The protein is Cytochrome c-552 of Pectobacterium carotovorum subsp. carotovorum (strain PC1).